Reading from the N-terminus, the 165-residue chain is Zinc finger C2H2 protein ECU11_0990 (165 aa).

2 stretches are compositionally biased toward basic and acidic residues: residues 1 to 10 (MEAESPKERV) and 19 to 32 (DPER…DTSS). Residues 1 to 38 (MEAESPKERVQGVSGESWDPERGVKEREDTSSKKGKGV) are disordered. 2 consecutive C2H2-type zinc fingers follow at residues 103–125 (FGCE…KAQH) and 136–158 (LFCP…SRYH).

The sequence is that of Zinc finger C2H2 protein ECU11_0990 from Encephalitozoon cuniculi (strain GB-M1) (Microsporidian parasite).